The sequence spans 55 residues: Ribulose bisphosphate carboxylase large chain (55 aa).

His18 serves as the catalytic Proton acceptor. 2 residues coordinate substrate: Arg19 and His27.

This sequence belongs to the RuBisCO large chain family. Type I subfamily. Heterohexadecamer of 8 large chains and 8 small chains; disulfide-linked. The disulfide link is formed within the large subunit homodimers. Requires Mg(2+) as cofactor. The disulfide bond which can form in the large chain dimeric partners within the hexadecamer appears to be associated with oxidative stress and protein turnover.

It localises to the plastid. The protein resides in the chloroplast. It catalyses the reaction 2 (2R)-3-phosphoglycerate + 2 H(+) = D-ribulose 1,5-bisphosphate + CO2 + H2O. The enzyme catalyses D-ribulose 1,5-bisphosphate + O2 = 2-phosphoglycolate + (2R)-3-phosphoglycerate + 2 H(+). Its function is as follows. RuBisCO catalyzes two reactions: the carboxylation of D-ribulose 1,5-bisphosphate, the primary event in carbon dioxide fixation, as well as the oxidative fragmentation of the pentose substrate in the photorespiration process. Both reactions occur simultaneously and in competition at the same active site. The chain is Ribulose bisphosphate carboxylase large chain from Vitis sp. (Grape).